A 268-amino-acid polypeptide reads, in one-letter code: Type II methyltransferase M2.DpnII (268 aa).

The protein belongs to the N(4)/N(6)-methyltransferase family. In terms of assembly, homodimer.

The catalysed reaction is a 2'-deoxyadenosine in DNA + S-adenosyl-L-methionine = an N(6)-methyl-2'-deoxyadenosine in DNA + S-adenosyl-L-homocysteine + H(+). Functionally, a beta subtype methylase that recognizes the single- or double-stranded sequence 5'-GATC-3', methylates A-2 on one or both strands (respectively), and protects the DNA from cleavage by the DpnII endonuclease. Further methylates DNA that is already methylated at 5'-GATC-3' sites. Essential for establishment of a previously unmethylated plasmid transformed into the cell as single-stranded DNA, enhances plasmid transfer to DpnII-containing strains of Streptococcus pneumoniae. The protein is Type II methyltransferase M2.DpnII of Streptococcus pneumoniae.